The sequence spans 227 residues: Charged multivesicular body protein 4b (227 aa).

Disordered regions lie at residues 1-26 (MSGI…SPQE) and 186-227 (SGPE…AGNM). A compositionally biased stretch (gly residues) spans 9–20 (FGAGAGGKGAGK). Residues 25-185 (QEAIQRLRDT…EELDKNLLEI (161 aa)) are a coiled coil.

Belongs to the SNF7 family. As to quaternary structure, probable core component of the endosomal sorting required for transport complex III (ESCRT-III). ESCRT-III components are thought to multimerize to form a flat lattice on the perimeter membrane of the endosome.

The protein localises to the cytoplasm. It is found in the cytosol. The protein resides in the late endosome membrane. It localises to the midbody. Its function is as follows. Probable core component of the endosomal sorting required for transport complex III (ESCRT-III) which is involved in multivesicular bodies (MVBs) formation and sorting of endosomal cargo proteins into MVBs. MVBs contain intraluminal vesicles (ILVs) that are generated by invagination and scission from the limiting membrane of the endosome and mostly are delivered to lysosomes enabling degradation of membrane proteins, such as stimulated growth factor receptors, lysosomal enzymes and lipids. The protein is Charged multivesicular body protein 4b (CHMP4B) of Gallus gallus (Chicken).